Reading from the N-terminus, the 993-residue chain is UPF0182 protein ROP_64500 (993 aa).

Helical transmembrane passes span 18 to 38 (VLLV…RLIS), 63 to 83 (LLLF…ALLL), 114 to 134 (LFGL…AQSS), 174 to 194 (WLFV…YIFG), 211 to 231 (VQLA…YWFD), 260 to 280 (KLIL…AIFL), and 288 to 308 (MATA…PLVV). The interval 904 to 948 (TGSVATAPSAEEGTPPETGTTPPVEQGAAPPAPTAPATPPSGTDV) is disordered. Over residues 908-926 (ATAPSAEEGTPPETGTTPP) the composition is skewed to low complexity. Over residues 933–942 (PPAPTAPATP) the composition is skewed to pro residues.

It belongs to the UPF0182 family.

The protein resides in the cell membrane. The chain is UPF0182 protein ROP_64500 from Rhodococcus opacus (strain B4).